Reading from the N-terminus, the 203-residue chain is GTP cyclohydrolase-2 (203 aa).

49-53 (RIHSE) serves as a coordination point for GTP. Zn(2+)-binding residues include Cys54, Cys65, and Cys67. GTP contacts are provided by residues Gln70, 92–94 (EGR), and Thr114. The active-site Proton acceptor is Asp126. The active-site Nucleophile is the Arg128. GTP is bound by residues Thr149 and Lys154.

This sequence belongs to the GTP cyclohydrolase II family. Zn(2+) is required as a cofactor.

It catalyses the reaction GTP + 4 H2O = 2,5-diamino-6-hydroxy-4-(5-phosphoribosylamino)-pyrimidine + formate + 2 phosphate + 3 H(+). The protein operates within cofactor biosynthesis; riboflavin biosynthesis; 5-amino-6-(D-ribitylamino)uracil from GTP: step 1/4. In terms of biological role, catalyzes the conversion of GTP to 2,5-diamino-6-ribosylamino-4(3H)-pyrimidinone 5'-phosphate (DARP), formate and pyrophosphate. The protein is GTP cyclohydrolase-2 of Shewanella sp. (strain MR-4).